Reading from the N-terminus, the 215-residue chain is MLDREGFRPNVGIILLNARNEVFWGKRLREHSWQFPQGGIKYGETPMQAMYRELHEETGLHPEHVKIIGRTRDWLRYEVPDKFIKREVRGHYRGQKQIWFLLRMVGRDCDICLRATDHPEFDAWRWNEYWVPLDAVIEFKRDVYQLALTELSRFLRRPAQRAEKPRGPRLSRYPRVIGVQAQQTLTIVDTSVVCSEIEVEASTLDEMPPHVIVGK.

Residues 6–149 (GFRPNVGIIL…KRDVYQLALT (144 aa)) form the Nudix hydrolase domain. The Nudix box signature appears at 38–59 (GGIKYGETPMQAMYRELHEETG).

The protein belongs to the Nudix hydrolase family. RppH subfamily. Requires a divalent metal cation as cofactor.

Accelerates the degradation of transcripts by removing pyrophosphate from the 5'-end of triphosphorylated RNA, leading to a more labile monophosphorylated state that can stimulate subsequent ribonuclease cleavage. The chain is RNA pyrophosphohydrolase from Burkholderia lata (strain ATCC 17760 / DSM 23089 / LMG 22485 / NCIMB 9086 / R18194 / 383).